The sequence spans 84 residues: Kidney-associated antigen 1 (84 aa).

Positions 31-84 (PGAAAAHLPRWPPPQLAASRREAPPLSQRPHRTQGAGSPPETNEKLTNPQVKEK) are disordered. Residues 75-84 (KLTNPQVKEK) are compositionally biased toward polar residues.

Expressed in testis and kidney, and, at lower levels, in urinary bladder and liver. Expressed by a high proportion of tumors of various histologic origin, including melanomas, sarcomas and colorectal carcinomas.

This is Kidney-associated antigen 1 (KAAG1) from Homo sapiens (Human).